Consider the following 252-residue polypeptide: Adenylate kinase (252 aa).

47-52 (GSGKGT) lines the ATP pocket. Residues 67–96 (ATGDMLRSQVKQGTPLGLEAKKIMDQGGLV) form an NMP region. AMP is bound by residues T68, R73, 94–96 (GLV), 123–126 (GFPR), and Q130. An LID region spans residues 164–201 (GRLVHPASGRSYHKIFSPPKKEMTDDITGEPLVQRSDD). ATP is bound by residues R165 and 174 to 175 (SY). AMP-binding residues include R198 and R209. Q237 contacts ATP.

It belongs to the adenylate kinase family. AK2 subfamily. In terms of assembly, monomer.

The protein localises to the cytoplasm. It is found in the cytosol. Its subcellular location is the mitochondrion intermembrane space. The catalysed reaction is AMP + ATP = 2 ADP. Its function is as follows. Catalyzes the reversible transfer of the terminal phosphate group between ATP and AMP. Plays an important role in cellular energy homeostasis and in adenine nucleotide metabolism. Adenylate kinase activity is critical for regulation of the phosphate utilization and the AMP de novo biosynthesis pathways. The chain is Adenylate kinase from Lodderomyces elongisporus (strain ATCC 11503 / CBS 2605 / JCM 1781 / NBRC 1676 / NRRL YB-4239) (Yeast).